The chain runs to 334 residues: Transaldolase (334 aa).

Catalysis depends on K136, which acts as the Schiff-base intermediate with substrate.

It belongs to the transaldolase family. Type 1 subfamily. As to quaternary structure, homodimer.

The protein resides in the cytoplasm. It carries out the reaction D-sedoheptulose 7-phosphate + D-glyceraldehyde 3-phosphate = D-erythrose 4-phosphate + beta-D-fructose 6-phosphate. It participates in carbohydrate degradation; pentose phosphate pathway; D-glyceraldehyde 3-phosphate and beta-D-fructose 6-phosphate from D-ribose 5-phosphate and D-xylulose 5-phosphate (non-oxidative stage): step 2/3. Transaldolase is important for the balance of metabolites in the pentose-phosphate pathway. This is Transaldolase from Nostoc punctiforme (strain ATCC 29133 / PCC 73102).